The chain runs to 515 residues: Pisatin demethylase (515 aa).

Cys453 contacts heme.

This sequence belongs to the cytochrome P450 family. Heme is required as a cofactor.

Can detoxify the phytoalexin pisatin from garden pea. Pisatin is an antimicrobial compound produced by pea in response to infection by plant pathogens. This is Pisatin demethylase (PDAT9) from Fusarium vanettenii (Neocosmospora pisi).